The sequence spans 367 residues: Histone RNA hairpin-binding protein (367 aa).

Residues 1–12 (MAQKTPTKGTRS) show a composition bias toward polar residues. Disordered stretches follow at residues 1–24 (MAQK…SPIK) and 49–200 (EVTE…HWEE). The segment covering 57-73 (LASRLEEERRCKSESRR) has biased composition (basic and acidic residues). Polar residues predominate over residues 147 to 156 (SNASTINEGA). Positions 183 to 192 (SDSSSVASSP) are enriched in low complexity. The tract at residues 206–275 (CTDEAVLKRR…KWKRSLYEYC (70 aa)) is RNA-binding. A disordered region spans residues 342 to 367 (MDESTLKASTNTDPSAPTDFSKMSSH). Residues 347 to 356 (LKASTNTDPS) show a composition bias toward polar residues.

Belongs to the SLBP family. In terms of processing, ubiquitinated by the CBC(fem-1) (Cul2-ElonginB-ElonginC) E3 ubiquitin-protein ligase complex, leading to its degradation.

Functionally, involved in histone pre-mRNA 3' processing. Required for chromosome condensation, progression of cell death and morphogenesis. In Caenorhabditis elegans, this protein is Histone RNA hairpin-binding protein (cdl-1).